The sequence spans 269 residues: Gem-associated protein 2 (269 aa).

2 positions are modified to phosphoserine: Ser-70 and Ser-155.

It belongs to the gemin-2 family. As to quaternary structure, monomer. Part of the core SMN complex that contains SMN1, GEMIN2/SIP1, DDX20/GEMIN3, GEMIN4, GEMIN5, GEMIN6, GEMIN7, GEMIN8 and STRAP/UNRIP. Part of the SMN-Sm complex that contains SMN1, GEMIN2/SIP1, DDX20/GEMIN3, GEMIN4, GEMIN5, GEMIN6, GEMIN7, GEMIN8, STRAP/UNRIP and the Sm proteins SNRPB, SNRPD1, SNRPD2, SNRPD3, SNRPE, SNRPF and SNRPG. Interacts with GEMIN5; the interaction is direct. Interacts (via C-terminus) with SMN1; the interaction is direct. Interacts with SNRPD1; the interaction is direct. Interacts with SNRPD2; the interaction is direct. Interacts (via N-terminus) with SNRPF; the interaction is direct. Interacts (via N-terminus) with SNRPE; the interaction is direct. Interacts (via N-terminus) with SNRPG; the interaction is direct.

The protein localises to the nucleus. The protein resides in the gem. It localises to the cytoplasm. In terms of biological role, the SMN complex catalyzes the assembly of small nuclear ribonucleoproteins (snRNPs), the building blocks of the spliceosome, and thereby plays an important role in the splicing of cellular pre-mRNAs. Most spliceosomal snRNPs contain a common set of Sm proteins SNRPB, SNRPD1, SNRPD2, SNRPD3, SNRPE, SNRPF and SNRPG that assemble in a heptameric protein ring on the Sm site of the small nuclear RNA to form the core snRNP (Sm core). In the cytosol, the Sm proteins SNRPD1, SNRPD2, SNRPE, SNRPF and SNRPG (5Sm) are trapped in an inactive 6S pICln-Sm complex by the chaperone CLNS1A that controls the assembly of the core snRNP. To assemble core snRNPs, the SMN complex accepts the trapped 5Sm proteins from CLNS1A. Binding of snRNA inside 5Sm ultimately triggers eviction of the SMN complex, thereby allowing binding of SNRPD3 and SNRPB to complete assembly of the core snRNP. Within the SMN complex, GEMIN2 constrains the conformation of 5Sm, thereby promoting 5Sm binding to snRNA containing the snRNP code (a nonameric Sm site and a 3'-adjacent stem-loop), thus preventing progression of assembly until a cognate substrate is bound. The sequence is that of Gem-associated protein 2 from Mus musculus (Mouse).